The sequence spans 466 residues: MFRNTLRTFPRPATPSLPTSSHSPIARASLSKSPLFVLSLVLVCIFFLSFLSHPDPSARKLQWPGLFPSPSPSVIHTKDLFLERALNATSEAFREICPSAGDPVHLDPDLTEAQKKRYLPLKRSKRGRYLLVTNTRQIEAHLPDLLNTLIVLLRYLAPEHLAVSILEGPSSDCTQKAIEQVLKPMLDDQGLESAWTRIETGESKIDWGKHNRIEKIAELRNTALAPLWQGEGDQKWEDEIEAVVFFNDVYLHAADILELVYQHVKNGAGITTAMDWWKKRPEYYYDVWVGRTIDTGDLFYPIDNPWWSPSSDLFPNSPNSRNAYSRLEPFQVFSSWNALAVLSPKPFLPPHNVRFRRGDVEKGECAASECTLIATDFWKAGFGKVAVVPSVQLAYERDVAKDIIEDVGKQKEQLGWIDGVPPEHLDDKIEWSTKPPKKVRCHPWPEVNGLSANVWEETRWVQPWLE.

Residues 1–23 (MFRNTLRTFPRPATPSLPTSSHS) form a disordered region. Over 1–33 (MFRNTLRTFPRPATPSLPTSSHSPIARASLSKS) the chain is Cytoplasmic. Residues 34–54 (PLFVLSLVLVCIFFLSFLSHP) form a helical; Signal-anchor for type II membrane protein membrane-spanning segment. The Lumenal portion of the chain corresponds to 55 to 466 (DPSARKLQWP…ETRWVQPWLE (412 aa)).

It depends on Mg(2+) as a cofactor. Mn(2+) is required as a cofactor. The cofactor is Co(2+).

Its subcellular location is the golgi apparatus membrane. Its pathway is protein modification; protein glycosylation. Responsible for addition of mannose residues in an alpha-1,3 linkage to a polymannosly precursor. May be involved in synthesis of capsule glucuronoxylomannan. The chain is Alpha-1,3-mannosyltransferase CMT1 from Cryptococcus neoformans var. neoformans serotype D (strain JEC21 / ATCC MYA-565) (Filobasidiella neoformans).